The sequence spans 189 residues: Casparian strip membrane protein 2 (189 aa).

The disordered stretch occupies residues 1-21 (MKVSTIESGEISKGASSPRKG). At 1–25 (MKVSTIESGEISKGASSPRKGMKRG) the chain is on the cytoplasmic side. Residues 26–46 (LSIMDFILRIFAAMSTLGSAL) traverse the membrane as a helical segment. The Extracellular portion of the chain corresponds to 47-73 (SMGTAKQTMPFATRFVRFKVSFHDLPT). A helical membrane pass occupies residues 74–94 (FLFFVTANSIVCGYLALSLVL). Topologically, residues 95–108 (SFFHIVRTISVKSR) are cytoplasmic. The helical transmembrane segment at 109–129 (ILLVFLDTVMFGLLTSGASAA) threads the bilayer. The Extracellular portion of the chain corresponds to 130–163 (AAIVYVAHYGNPSANWFPFCQQYNSFCGRISGSL). A helical transmembrane segment spans residues 164–184 (VGSFIAVVIFMILILMSGISI). Residues 185 to 189 (SKSKH) lie on the Cytoplasmic side of the membrane.

Belongs to the Casparian strip membrane proteins (CASP) family. Homodimer and heterodimers.

The protein localises to the cell membrane. Functionally, regulates membrane-cell wall junctions and localized cell wall deposition. Required for establishment of the Casparian strip membrane domain (CSD) and the subsequent formation of Casparian strips, a cell wall modification of the root endodermis that determines an apoplastic barrier between the intraorganismal apoplasm and the extraorganismal apoplasm and prevents lateral diffusion. The protein is Casparian strip membrane protein 2 of Medicago truncatula (Barrel medic).